We begin with the raw amino-acid sequence, 200 residues long: LexA repressor (200 aa).

Positions 28-48 (RAEIARILGFKSANAAEEHIK) form a DNA-binding region, H-T-H motif. Active-site for autocatalytic cleavage activity residues include serine 118 and lysine 155.

It belongs to the peptidase S24 family. In terms of assembly, homodimer.

It catalyses the reaction Hydrolysis of Ala-|-Gly bond in repressor LexA.. Represses a number of genes involved in the response to DNA damage (SOS response), including recA and lexA. In the presence of single-stranded DNA, RecA interacts with LexA causing an autocatalytic cleavage which disrupts the DNA-binding part of LexA, leading to derepression of the SOS regulon and eventually DNA repair. The chain is LexA repressor from Cellvibrio japonicus (strain Ueda107) (Pseudomonas fluorescens subsp. cellulosa).